Reading from the N-terminus, the 636-residue chain is Chaperone protein DnaK (636 aa).

T203 is subject to Phosphothreonine; by autocatalysis. The disordered stretch occupies residues 602–636; the sequence is VYGKQQEGAPAQEEPSAEGKKADDEGTVEGEFREV. Positions 618–636 are enriched in basic and acidic residues; sequence AEGKKADDEGTVEGEFREV.

Belongs to the heat shock protein 70 family.

Its function is as follows. Acts as a chaperone. The polypeptide is Chaperone protein DnaK (Dehalococcoides mccartyi (strain ATCC BAA-2100 / JCM 16839 / KCTC 5957 / BAV1)).